The sequence spans 227 residues: Peroxisomal membrane protein 11B (227 aa).

Over 1-85 the chain is Cytoplasmic; the sequence is MSLDTVDKLV…RNPGATPMIR (85 aa). Residues 86–106 traverse the membrane as a helical segment; sequence FLAVLANSGEMVYFFFDHFLW. The Lumenal segment spans residues 107-201; it reads LSRIGSIDAK…IALAEIHPNP (95 aa). A helical membrane pass occupies residues 202–222; that stretch reads FCNHTITLGISGLVSAWAGWY. Residues 223-227 lie on the Cytoplasmic side of the membrane; sequence RNWPS.

This sequence belongs to the peroxin-11 family. As to quaternary structure, homooligomer. Interacts with ARC5 and FIS1B on peroxisomes. Expressed in roots, leaves and developing siliques.

The protein resides in the peroxisome membrane. Functionally, involved in peroxisomal proliferation. Promotes peroxisomal duplication, aggregation or elongation without fission. The sequence is that of Peroxisomal membrane protein 11B (PEX11B) from Arabidopsis thaliana (Mouse-ear cress).